Reading from the N-terminus, the 120-residue chain is Glycine cleavage system H protein (120 aa).

The Lipoyl-binding domain occupies 17–99 (VATVGITEHA…QGAAWFFKLK (83 aa)). Lys58 carries the N6-lipoyllysine modification.

This sequence belongs to the GcvH family. The glycine cleavage system is composed of four proteins: P, T, L and H. It depends on (R)-lipoate as a cofactor.

Functionally, the glycine cleavage system catalyzes the degradation of glycine. The H protein shuttles the methylamine group of glycine from the P protein to the T protein. This chain is Glycine cleavage system H protein, found in Sinorhizobium medicae (strain WSM419) (Ensifer medicae).